We begin with the raw amino-acid sequence, 529 residues long: Basal body-orientation factor 1 (529 aa).

Over residues 1 to 13 the composition is skewed to basic residues; the sequence is MPSKGKDKKKGKS. The segment at 1-22 is disordered; it reads MPSKGKDKKKGKSRGKDTKKLI. Coiled-coil stretches lie at residues 55 to 198 and 271 to 361; these read DTSR…LKQE and IKEK…EVER. Residues 510-529 form a disordered region; that stretch reads GKVVLPTIPKGPQESDTGTF.

It belongs to the BBOF1 family. In terms of assembly, interacts with MNS1 and ODF2.

The protein resides in the cytoplasm. It localises to the cytoskeleton. Its subcellular location is the cilium basal body. The protein localises to the flagellum axoneme. Its function is as follows. Plays an essential role in sperm motility and male fertility by stabilizing the sperm flagellar axonemal structure. May be required for the stability of ODF2 and MANS1 proteins. Dispensable for the assembly and function of motile cilia. This chain is Basal body-orientation factor 1, found in Macaca fascicularis (Crab-eating macaque).